The sequence spans 158 residues: Urease accessory protein UreE (158 aa).

The protein belongs to the UreE family.

It is found in the cytoplasm. Functionally, involved in urease metallocenter assembly. Binds nickel. Probably functions as a nickel donor during metallocenter assembly. The sequence is that of Urease accessory protein UreE from Corynebacterium urealyticum (strain ATCC 43042 / DSM 7109).